The following is a 527-amino-acid chain: Hopanoid C-2 methylase (527 aa).

Positions 36–148 (VAAFMPPQGL…AKLTHDVTRP (113 aa)) constitute a B12-binding domain. The 236-residue stretch at 173-408 (AECSKYLLGS…HDQVVAMWKD (236 aa)) folds into the Radical SAM core domain. Cys-189, Cys-193, and Cys-196 together coordinate [4Fe-4S] cluster.

The protein belongs to the radical SAM superfamily. It depends on [4Fe-4S] cluster as a cofactor.

In terms of biological role, required for methylation of hopanoids at the C-2 position. The chain is Hopanoid C-2 methylase from Rhodopseudomonas palustris (strain TIE-1).